The primary structure comprises 415 residues: 6-phospho-beta-glucosidase BglT (415 aa).

Position 1 to 64 (1 to 64) interacts with NAD(+); sequence MRIAVIGGGS…DRFKVLISDT (64 aa). R87 and N140 together coordinate substrate. A Mn(2+)-binding site is contributed by C162. Residue N163 coordinates substrate. Position 192 (H192) interacts with Mn(2+). Y241 (proton acceptor) is an active-site residue. R261 is a binding site for substrate.

Belongs to the glycosyl hydrolase 4 family. Homodimer or homotetramer. Exists in a homodimer/homotetramer equilibrium state in solution. NAD(+) serves as cofactor. The cofactor is Mn(2+).

The enzyme catalyses 6-phospho-beta-D-glucosyl-(1-&gt;4)-D-glucose + H2O = D-glucose 6-phosphate + D-glucose. Hydrolyzes cellobiose 6'-phosphate into glucose 6-phosphate (Glc6P) and glucose. This chain is 6-phospho-beta-glucosidase BglT (bglT), found in Thermotoga maritima (strain ATCC 43589 / DSM 3109 / JCM 10099 / NBRC 100826 / MSB8).